A 636-amino-acid polypeptide reads, in one-letter code: Biosynthetic arginine decarboxylase (636 aa).

At Lys101 the chain carries N6-(pyridoxal phosphate)lysine. Substrate is bound at residue 286 to 296; the sequence is FDVGGGLAVDY.

This sequence belongs to the Orn/Lys/Arg decarboxylase class-II family. SpeA subfamily. Requires Mg(2+) as cofactor. It depends on pyridoxal 5'-phosphate as a cofactor.

It catalyses the reaction L-arginine + H(+) = agmatine + CO2. It participates in amine and polyamine biosynthesis; agmatine biosynthesis; agmatine from L-arginine: step 1/1. In terms of biological role, catalyzes the biosynthesis of agmatine from arginine. The protein is Biosynthetic arginine decarboxylase of Shewanella amazonensis (strain ATCC BAA-1098 / SB2B).